Reading from the N-terminus, the 441-residue chain is Ribulose bisphosphate carboxylase large chain (441 aa).

Substrate contacts are provided by asparagine 89 and threonine 139. The Proton acceptor role is filled by lysine 141. Lysine 143 lines the substrate pocket. 3 residues coordinate Mg(2+): lysine 167, aspartate 169, and glutamate 170. Lysine 167 is subject to N6-carboxylysine. The active-site Proton acceptor is histidine 260. 3 residues coordinate substrate: arginine 261, histidine 293, and serine 345.

The protein belongs to the RuBisCO large chain family. Type I subfamily. In terms of assembly, heterohexadecamer of 8 large chains and 8 small chains; disulfide-linked. The disulfide link is formed within the large subunit homodimers. Mg(2+) is required as a cofactor. The disulfide bond which can form in the large chain dimeric partners within the hexadecamer appears to be associated with oxidative stress and protein turnover.

It is found in the plastid. The protein localises to the chloroplast. It carries out the reaction 2 (2R)-3-phosphoglycerate + 2 H(+) = D-ribulose 1,5-bisphosphate + CO2 + H2O. It catalyses the reaction D-ribulose 1,5-bisphosphate + O2 = 2-phosphoglycolate + (2R)-3-phosphoglycerate + 2 H(+). Functionally, ruBisCO catalyzes two reactions: the carboxylation of D-ribulose 1,5-bisphosphate, the primary event in carbon dioxide fixation, as well as the oxidative fragmentation of the pentose substrate in the photorespiration process. Both reactions occur simultaneously and in competition at the same active site. This is Ribulose bisphosphate carboxylase large chain from Polemonium reptans (Greek valerian).